A 147-amino-acid chain; its full sequence is Hemoglobin subunit epsilon (147 aa).

The region spanning 3–147 (HWSAEEKQLI…VAHALARKYH (145 aa)) is the Globin domain. Residues histidine 64 and histidine 93 each contribute to the heme b site.

It belongs to the globin family. In terms of assembly, heterotetramer of two epsilon chains and two alpha chains. Hemoglobin E (Hbe) contains a alpha-A chains while hemoglobin M (Hbm) contains alpha-D chains.

Beta-type chain found in early embryos. This Gallus gallus (Chicken) protein is Hemoglobin subunit epsilon (HBE).